The primary structure comprises 233 residues: Octanoyltransferase (233 aa).

Residues 36–211 (DTTPDEIWLV…EFTRQLGYPT (176 aa)) enclose the BPL/LPL catalytic domain. Residues 75–82 (RGGQVTYH), 142–144 (SLG), and 155–157 (GLA) each bind substrate. The active-site Acyl-thioester intermediate is Cys-173.

The protein belongs to the LipB family.

The protein resides in the cytoplasm. It catalyses the reaction octanoyl-[ACP] + L-lysyl-[protein] = N(6)-octanoyl-L-lysyl-[protein] + holo-[ACP] + H(+). It participates in protein modification; protein lipoylation via endogenous pathway; protein N(6)-(lipoyl)lysine from octanoyl-[acyl-carrier-protein]: step 1/2. Functionally, catalyzes the transfer of endogenously produced octanoic acid from octanoyl-acyl-carrier-protein onto the lipoyl domains of lipoate-dependent enzymes. Lipoyl-ACP can also act as a substrate although octanoyl-ACP is likely to be the physiological substrate. The chain is Octanoyltransferase from Yersinia pseudotuberculosis serotype O:3 (strain YPIII).